We begin with the raw amino-acid sequence, 806 residues long: Glycerol-3-phosphate acyltransferase (806 aa).

The short motif at 305–310 (CHRSHM) is the HXXXXD motif element.

Belongs to the GPAT/DAPAT family.

The protein resides in the cell inner membrane. It catalyses the reaction sn-glycerol 3-phosphate + an acyl-CoA = a 1-acyl-sn-glycero-3-phosphate + CoA. Its pathway is phospholipid metabolism; CDP-diacylglycerol biosynthesis; CDP-diacylglycerol from sn-glycerol 3-phosphate: step 1/3. This chain is Glycerol-3-phosphate acyltransferase, found in Salmonella paratyphi A (strain ATCC 9150 / SARB42).